The chain runs to 184 residues: 20.9 kDa protein (184 aa).

This is 20.9 kDa protein from Zymomonas mobilis subsp. mobilis (strain ATCC 10988 / DSM 424 / LMG 404 / NCIMB 8938 / NRRL B-806 / ZM1).